The sequence spans 180 residues: Hypoxanthine-guanine phosphoribosyltransferase (180 aa).

2 residues coordinate diphosphate: lysine 43 and glycine 44. The Mg(2+) site is built by glutamate 99 and aspartate 100. Catalysis depends on aspartate 103, which acts as the Proton acceptor. GMP contacts are provided by residues lysine 131, 152–153 (FI), and aspartate 159. Residue arginine 165 coordinates diphosphate.

It belongs to the purine/pyrimidine phosphoribosyltransferase family. Mg(2+) serves as cofactor.

The protein resides in the cytoplasm. It carries out the reaction IMP + diphosphate = hypoxanthine + 5-phospho-alpha-D-ribose 1-diphosphate. It catalyses the reaction GMP + diphosphate = guanine + 5-phospho-alpha-D-ribose 1-diphosphate. It functions in the pathway purine metabolism; IMP biosynthesis via salvage pathway; IMP from hypoxanthine: step 1/1. The protein operates within purine metabolism; GMP biosynthesis via salvage pathway; GMP from guanine: step 1/1. Functionally, purine salvage pathway enzyme that catalyzes the transfer of the ribosyl-5-phosphate group from 5-phospho-alpha-D-ribose 1-diphosphate (PRPP) to the N9 position of the 6-oxopurines hypoxanthine and guanine to form the corresponding ribonucleotides IMP (inosine 5'-monophosphate) and GMP (guanosine 5'-monophosphate), with the release of PPi. The polypeptide is Hypoxanthine-guanine phosphoribosyltransferase (hpt) (Streptococcus mutans serotype c (strain ATCC 700610 / UA159)).